Reading from the N-terminus, the 414-residue chain is Phthiocerol/phthiodiolone dimycocerosyl transferase (414 aa).

The Proton acceptor role is filled by His-118.

This sequence belongs to the acyltransferase PapA5 family. As to quaternary structure, monomer. Interacts directly with the acyl carrier protein (ACP) domain of the mycocerosic acid synthase (mas) protein.

The enzyme catalyses 2 a mycocerosyl-[mycocerosic acid synthase] + a phthiocerol = a dimycocerosyl phthiocerol + 2 holo-[mycocerosic acid synthase].. It carries out the reaction 2 a mycocerosyl-[mycocerosic acid synthase] + a phthiodiolone = a dimycocerosyl phthiodiolone + 2 holo-[mycocerosic acid synthase].. It catalyses the reaction 2 a mycocerosyl-[mycocerosic acid synthase] + a phenolphthiocerol = a dimycocerosyl phenolphthiocerol + 2 holo-[mycocerosic acid synthase].. In terms of biological role, catalyzes diesterification of phthiocerol, phthiodiolone, and phenolphthiocerol with mycocerosic acids, the final step in the phthiocerol, phthiodiolone and phenolphthiocerol dimycocerosate esters (PDIM) synthesis. Can directly transfer the mycocerosate bound to the mycocerosic acid synthase (mas) onto the substrate alcohols. This Mycobacterium ulcerans (strain Agy99) protein is Phthiocerol/phthiodiolone dimycocerosyl transferase (papA5).